We begin with the raw amino-acid sequence, 98 residues long: HssA/B-like protein 39 (98 aa).

Positions 1 to 21 (MTLFSSISSMSTSMSGSKSSI) are disordered.

It belongs to the hssA/B family.

The chain is HssA/B-like protein 39 (hssl39) from Dictyostelium discoideum (Social amoeba).